The primary structure comprises 184 residues: Protein GrpE (184 aa).

A disordered region spans residues 1–24 (MADEQLDEKNLNSEEAGAVNGDAR).

The protein belongs to the GrpE family. As to quaternary structure, homodimer.

The protein resides in the cytoplasm. Participates actively in the response to hyperosmotic and heat shock by preventing the aggregation of stress-denatured proteins, in association with DnaK and GrpE. It is the nucleotide exchange factor for DnaK and may function as a thermosensor. Unfolded proteins bind initially to DnaJ; upon interaction with the DnaJ-bound protein, DnaK hydrolyzes its bound ATP, resulting in the formation of a stable complex. GrpE releases ADP from DnaK; ATP binding to DnaK triggers the release of the substrate protein, thus completing the reaction cycle. Several rounds of ATP-dependent interactions between DnaJ, DnaK and GrpE are required for fully efficient folding. In Pseudomonas entomophila (strain L48), this protein is Protein GrpE.